Consider the following 610-residue polypeptide: ATP-dependent zinc metalloprotease FtsH (610 aa).

Over 1-5 (MNRSN) the chain is Cytoplasmic. A helical membrane pass occupies residues 6 to 26 (IWNLLFTILIIVTLFWLARFF). The Periplasmic portion of the chain corresponds to 27 to 107 (YVENSPVSKL…SGERSGSSSF (81 aa)). The chain crosses the membrane as a helical span at residues 108–128 (WINVLGTLIPTILFIVVWLFI). Residues 129–610 (MRSLSGRNNQ…LSEEFEKVVE (482 aa)) lie on the Cytoplasmic side of the membrane. ATP-binding positions include G164, 204-208 (GTGKT), L209, H343, and E371. H423 serves as a coordination point for Zn(2+). E424 is an active-site residue. Residues H427 and D500 each contribute to the Zn(2+) site.

It in the central section; belongs to the AAA ATPase family. In the C-terminal section; belongs to the peptidase M41 family. As to quaternary structure, the isolated ADP-bound cytosolic domain forms a 6-fold symmetric protease disk and a 2-fold symmetric AAA ATPase ring. In the absence of nucleotide the AAA ATPase ring also forms symmetric hexamers. Zn(2+) is required as a cofactor.

The protein localises to the cell inner membrane. Acts as a processive, ATP-dependent zinc metallopeptidase for both cytoplasmic and membrane proteins. Plays a role in the quality control of integral membrane proteins. The polypeptide is ATP-dependent zinc metalloprotease FtsH (Thermotoga maritima (strain ATCC 43589 / DSM 3109 / JCM 10099 / NBRC 100826 / MSB8)).